Here is a 265-residue protein sequence, read N- to C-terminus: 3-methyl-2-oxobutanoate hydroxymethyltransferase (265 aa).

The Mg(2+) site is built by Asp45 and Asp84. Residues 45 to 46 (DS), Asp84, and Lys112 contribute to the 3-methyl-2-oxobutanoate site. Glu114 is a Mg(2+) binding site. Glu181 acts as the Proton acceptor in catalysis.

It belongs to the PanB family. As to quaternary structure, homodecamer; pentamer of dimers. Mg(2+) is required as a cofactor.

It localises to the cytoplasm. It catalyses the reaction 3-methyl-2-oxobutanoate + (6R)-5,10-methylene-5,6,7,8-tetrahydrofolate + H2O = 2-dehydropantoate + (6S)-5,6,7,8-tetrahydrofolate. It functions in the pathway cofactor biosynthesis; (R)-pantothenate biosynthesis; (R)-pantoate from 3-methyl-2-oxobutanoate: step 1/2. Functionally, catalyzes the reversible reaction in which hydroxymethyl group from 5,10-methylenetetrahydrofolate is transferred onto alpha-ketoisovalerate to form ketopantoate. The sequence is that of 3-methyl-2-oxobutanoate hydroxymethyltransferase from Yersinia pseudotuberculosis serotype O:1b (strain IP 31758).